We begin with the raw amino-acid sequence, 45 residues long: Osteocalcin 1 (45 aa).

A Gla domain is found at 1–41; sequence AAGQLSLTQLESLREVCELNLACEHMMDTEGIIAAYTAYYG. 4 residues coordinate Ca(2+): glutamate 11, glutamate 15, glutamate 18, and glutamate 24. 4-carboxyglutamate is present on residues glutamate 11, glutamate 15, and glutamate 18. A disulfide bridge connects residues cysteine 17 and cysteine 23.

This sequence belongs to the osteocalcin/matrix Gla protein family. Gamma-carboxyglutamate residues are formed by vitamin K dependent carboxylation by GGCX. These residues are essential for the binding of calcium.

It is found in the secreted. In terms of biological role, the carboxylated form is one of the main organic components of the bone matrix, which constitutes 1-2% of the total bone protein. The carboxylated form binds strongly to apatite and calcium. This Diplodus sargus (White seabream) protein is Osteocalcin 1.